Here is a 365-residue protein sequence, read N- to C-terminus: MKNVGETGPGKCQLLRCPAAGCKAFYRKEGKLQDHMAGHSEQKPWKCGIKDCDKVFARKRQILKHVKRHLALKKLSCPTAGCKMTFSTKKSLSRHKLYKHGEAVPLKCFVPGCKRSFRKKRALRRHLSVHSNEPLSVCDVPGCSWKSSSVAKLVAHQKRHRGYRCSYEGCQTVSPTWTALQTHVKKHPLELQCAACKKPFKKASALRRHKATHAKKPLQLPCPRQDCDKTFSSVFNLTHHVRKLHLCLQTHRCPHSGCTRSFAMRESLLRHLVVHDPERKKLKLKFVRGPSKFLGRGTRCRTPVVEEDLSHLFSRKLLFHFKTRLETNLSGLFNERQLREPAEPEVNLSGLFQRPQGRAKAEKSA.

9 C2H2-type zinc fingers span residues 15–39, 45–69, 75–100, 106–130, 136–160, 163–187, 191–213, 220–245, and 251–275; these read LRCP…MAGH, WKCG…VKRH, LSCP…LYKH, LKCF…LSVH, SVCD…QKRH, YRCS…VKKH, LQCA…KATH, LPCP…RKLH, and HRCP…LVVH.

As to quaternary structure, the 42S RNP particle comprises four subunits each of which contains one molecule of 5S RNA, three molecules of tRNA, two molecules of p50 (EF1-alpha) and one molecule of the 5S RNA binding protein 43.

Its function is as follows. p43 is a 5S RNA binding protein which is a major constituent of oocytes and comprises part of a 42S ribonucleoprotein storage particle. The chain is P43 5S RNA-binding protein from Xenopus laevis (African clawed frog).